A 230-amino-acid chain; its full sequence is Urease accessory protein UreE (230 aa).

Residues 200-210 (HAIHSHGTGHT) are compositionally biased toward basic residues. Residues 200-230 (HAIHSHGTGHTHSHDHDHSHSHGDHDHDHKH) form a disordered region. Over residues 211–230 (HSHDHDHSHSHGDHDHDHKH) the composition is skewed to basic and acidic residues.

The protein belongs to the UreE family.

The protein resides in the cytoplasm. Functionally, involved in urease metallocenter assembly. Binds nickel. Probably functions as a nickel donor during metallocenter assembly. The polypeptide is Urease accessory protein UreE (Yersinia enterocolitica serotype O:8 / biotype 1B (strain NCTC 13174 / 8081)).